Consider the following 168-residue polypeptide: I-Kappa-B like protein G2 (168 aa).

2 ANK repeats span residues 56-88 (SQRQ…DING) and 93-123 (GGNT…NKTA).

It belongs to the polydnaviridae I-Kappa-B-like protein family.

Functionally, suppresses the host immune response through NF-kappa-B inactivation. Possesses ankyrin repeat domains required for NF-kappa-B binding but lacks the regulatory regions required for dissociation from NF-kappa-B and degradation. Therefore, prevents host NF-kappa-B release and subsequent activation. The polypeptide is I-Kappa-B like protein G2 (G4) (Microplitis demolitor (Parasitoid wasp)).